We begin with the raw amino-acid sequence, 371 residues long: Peptide chain release factor 2 (371 aa).

At Q251 the chain carries N5-methylglutamine.

Belongs to the prokaryotic/mitochondrial release factor family. Post-translationally, methylated by PrmC. Methylation increases the termination efficiency of RF2.

It localises to the cytoplasm. Functionally, peptide chain release factor 2 directs the termination of translation in response to the peptide chain termination codons UGA and UAA. This Pseudarthrobacter chlorophenolicus (strain ATCC 700700 / DSM 12829 / CIP 107037 / JCM 12360 / KCTC 9906 / NCIMB 13794 / A6) (Arthrobacter chlorophenolicus) protein is Peptide chain release factor 2.